The following is a 184-amino-acid chain: Probable chemoreceptor glutamine deamidase CheD (184 aa).

It belongs to the CheD family.

The catalysed reaction is L-glutaminyl-[protein] + H2O = L-glutamyl-[protein] + NH4(+). Its function is as follows. Probably deamidates glutamine residues to glutamate on methyl-accepting chemotaxis receptors (MCPs), playing an important role in chemotaxis. This chain is Probable chemoreceptor glutamine deamidase CheD, found in Rhizobium leguminosarum bv. trifolii (strain WSM2304).